The following is a 441-amino-acid chain: GTPase Der (441 aa).

EngA-type G domains follow at residues 4–168 (PVVA…PEDI) and 177–352 (IRIA…EQNS). GTP contacts are provided by residues 10 to 17 (GRPNVGKS), 57 to 61 (DTGGI), 121 to 124 (NKVE), 183 to 190 (GRPNVGKS), 230 to 234 (DTAGM), and 295 to 298 (NKWD). In terms of domain architecture, KH-like spans 353–437 (TRVATATLNT…PIRMIVRQKD (85 aa)).

This sequence belongs to the TRAFAC class TrmE-Era-EngA-EngB-Septin-like GTPase superfamily. EngA (Der) GTPase family. As to quaternary structure, associates with the 50S ribosomal subunit.

Its function is as follows. GTPase that plays an essential role in the late steps of ribosome biogenesis. This is GTPase Der from Desulfitobacterium hafniense (strain DSM 10664 / DCB-2).